The following is a 420-amino-acid chain: MAIRKGSSYAVAALLALASVAAVAGEVFFQEKFEDGWESRWVKSEWKKDENMAGEWNHTSGKWNGDAEDKGIQTSEDYRFYAISAEYPEFSNKDKTLVLQFSVKHEQKLDCGGGYVKLLGGDVDQKTLGGDTSYSIISRPDISRYSTKKVHTILTKDGKNHLIKKDVPCQTDQLTHVYTFIIRPDATYSILIDNEEKHTGSIYEHWDILPPKKIKDPEAKKPEDWDDKEYIPDPEDKKPEGYDDIPKEIPDPDAKKPEDWDDEEDGEWTAPTIPNPEYKGPWKQKKIKNPNYQGKWKAPMIDNPDFKDDPYIYAFDSLKYIGIELWQVKSGTLFDNIIITDDPALAKTFAEETWGKHKEAEKAAFDEAEKKKEEEDAAKGGDDEDDDLEDEEDDEKADEDKADSDAEDGKDSDDEKHDEL.

The signal sequence occupies residues 1-25 (MAIRKGSSYAVAALLALASVAAVAG). Asparagine 57 carries an N-linked (GlcNAc...) asparagine glycan. An alpha-D-glucoside is bound by residues tyrosine 115, lysine 117, tyrosine 134, and aspartate 141. 7 tandem repeats follow at residues 197–208 (KHTGSIYEHWDI), 216–227 (DPEAKKPEDWDD), 233–244 (DPEDKKPEGYDD), 251–262 (DPDAKKPEDWDD), 266–276 (GEWTAPTIPNP), 280–290 (GPWKQKKIKNP), and 294–304 (GKWKAPMIDNP). A 4 X approximate repeats region spans residues 197–262 (KHTGSIYEHW…DAKKPEDWDD (66 aa)). The span at 213–258 (KIKDPEAKKPEDWDDKEYIPDPEDKKPEGYDDIPKEIPDPDAKKPE) shows a compositional bias: basic and acidic residues. The disordered stretch occupies residues 213–285 (KIKDPEAKKP…PEYKGPWKQK (73 aa)). A 3 X approximate repeats region spans residues 266–304 (GEWTAPTIPNPEYKGPWKQKKIKNPNYQGKWKAPMIDNP). Glutamate 324 contacts an alpha-D-glucoside. Residues 355–381 (GKHKEAEKAAFDEAEKKKEEEDAAKGG) show a composition bias toward basic and acidic residues. The segment at 355–420 (GKHKEAEKAA…DSDDEKHDEL (66 aa)) is disordered. Over residues 382–402 (DDEDDDLEDEEDDEKADEDKA) the composition is skewed to acidic residues. Positions 403-420 (DSDAEDGKDSDDEKHDEL) are enriched in basic and acidic residues. The Prevents secretion from ER signature appears at 417–420 (HDEL).

This sequence belongs to the calreticulin family.

It localises to the endoplasmic reticulum lumen. Molecular calcium-binding chaperone promoting folding, oligomeric assembly and quality control in the ER via the calreticulin/calnexin cycle. This lectin may interact transiently with almost all of the monoglucosylated glycoproteins that are synthesized in the ER. The polypeptide is Calreticulin (CRT) (Zea mays (Maize)).